Consider the following 181-residue polypeptide: Inner kinetochore subunit MCM16 (181 aa).

A coiled-coil region spans residues 112 to 171 (KQLIESRAERDELMSKLIELSSKFPKPTIPPDDSDTAGKQVEVEKENETIQELMIALQIH).

It belongs to the CENP-H/MCM16 family. In terms of assembly, component of the heterotrimeric kinetochore subcomplex CTF3, which consists of CTF3, MCM16 and MCM22. The CTF3 subcomplex is part of a larger constitutive centromere-associated network (CCAN) (also known as central kinetochore CTF19 complex in yeast), which is composed of at least AME1, CHL4, CNN1, CTF3, CTF19, IML3, MCM16, MCM21, MCM22, MHF1, MHF2, MIF2, NKP1, NKP2, OKP1 and WIP1. Interacts with CTF19.

Its subcellular location is the nucleus. It localises to the chromosome. The protein resides in the centromere. It is found in the kinetochore. Component of the kinetochore, a multiprotein complex that assembles on centromeric DNA and attaches chromosomes to spindle microtubules, mediating chromosome segregation and sister chromatid segregation during meiosis and mitosis. Component of the inner kinetochore constitutive centromere-associated network (CCAN), which serves as a structural platform for outer kinetochore assembly. This chain is Inner kinetochore subunit MCM16 (MCM16), found in Saccharomyces cerevisiae (strain ATCC 204508 / S288c) (Baker's yeast).